The following is a 527-amino-acid chain: Bifunctional purine biosynthesis protein PurH (527 aa).

The 149-residue stretch at 1-149 (MASDFLPVRR…KNFARVAVAT (149 aa)) folds into the MGS-like domain.

It belongs to the PurH family.

It carries out the reaction (6R)-10-formyltetrahydrofolate + 5-amino-1-(5-phospho-beta-D-ribosyl)imidazole-4-carboxamide = 5-formamido-1-(5-phospho-D-ribosyl)imidazole-4-carboxamide + (6S)-5,6,7,8-tetrahydrofolate. It catalyses the reaction IMP + H2O = 5-formamido-1-(5-phospho-D-ribosyl)imidazole-4-carboxamide. The protein operates within purine metabolism; IMP biosynthesis via de novo pathway; 5-formamido-1-(5-phospho-D-ribosyl)imidazole-4-carboxamide from 5-amino-1-(5-phospho-D-ribosyl)imidazole-4-carboxamide (10-formyl THF route): step 1/1. It participates in purine metabolism; IMP biosynthesis via de novo pathway; IMP from 5-formamido-1-(5-phospho-D-ribosyl)imidazole-4-carboxamide: step 1/1. This Xanthomonas oryzae pv. oryzae (strain KACC10331 / KXO85) protein is Bifunctional purine biosynthesis protein PurH.